Consider the following 132-residue polypeptide: Capsid protein (132 aa).

This sequence belongs to the Leviviricetes capsid protein family. As to quaternary structure, homodimer. The capsid protein dimer binds to the viral RNA via an operator hairpin, but also many other RNA sequences in the viral genome.

The protein resides in the virion. Capsid protein self-assembles to form an icosahedral capsid with a T=3 symmetry, about 26 nm in diameter, and consisting of 89 capsid proteins dimers (178 capsid proteins). Involved in viral genome encapsidation through the interaction between a capsid protein dimer and the multiple packaging signals present in the RNA genome. Binding of the capsid proteins to the viral RNA induces a conformational change required for efficient T=3 shell formation. The capsid also contains 1 copy of the A2 maturation protein. Functionally, acts as a translational repressor of viral replicase synthesis late in infection. This latter function is the result of capsid protein interaction with an RNA hairpin which contains the replicase ribosome-binding site. This Enterobacteria phage SP (Bacteriophage SP) protein is Capsid protein.